The primary structure comprises 370 residues: Actin-related protein 2/3 complex subunit 1A (370 aa).

WD repeat units follow at residues 6-45 (FLLEPITCHAWNRDRTQIALSPNNHEVHIYKKNGSQWVKA), 50-89 (EHNGHITGIDWAPKSDRIVTCGADRNAYVWSQKDGVWKPT), 140-179 (PIRSTVLSLDWHPNNVLLAAGSCDFKCRVFSAYIKEVDEK), 202-241 (GTGGWVHGVSFSASGSRLAWVSHDSTVSVADASKSVQVST), 244-284 (TEFL…TFVS), and 322-365 (LHQN…SSIQ).

It belongs to the WD repeat ARPC1 family. Probable component of the Arp2/3 complex in which it may replace ARPC1B. In addition to its role in the cytoplasmic cytoskeleton, the Arp2/3 complex also promotes actin polymerization in the nucleus, thereby regulating gene transcription and repair of damaged DNA.

It is found in the cytoplasm. The protein localises to the cytoskeleton. The protein resides in the nucleus. Functionally, probably functions as a component of the Arp2/3 complex which is involved in regulation of actin polymerization and together with an activating nucleation-promoting factor (NPF) mediates the formation of branched actin networks. This is Actin-related protein 2/3 complex subunit 1A (ARPC1A) from Homo sapiens (Human).